The following is a 137-amino-acid chain: Ribosome-binding factor A (137 aa).

This sequence belongs to the RbfA family. As to quaternary structure, monomer. Binds 30S ribosomal subunits, but not 50S ribosomal subunits or 70S ribosomes.

It is found in the cytoplasm. In terms of biological role, one of several proteins that assist in the late maturation steps of the functional core of the 30S ribosomal subunit. Associates with free 30S ribosomal subunits (but not with 30S subunits that are part of 70S ribosomes or polysomes). Required for efficient processing of 16S rRNA. May interact with the 5'-terminal helix region of 16S rRNA. In Erwinia tasmaniensis (strain DSM 17950 / CFBP 7177 / CIP 109463 / NCPPB 4357 / Et1/99), this protein is Ribosome-binding factor A.